The sequence spans 158 residues: 2-C-methyl-D-erythritol 2,4-cyclodiphosphate synthase (158 aa).

A divalent metal cation is bound by residues aspartate 9 and histidine 11. 4-CDP-2-C-methyl-D-erythritol 2-phosphate contacts are provided by residues 9-11 and 35-36; these read DVH and HS. An a divalent metal cation-binding site is contributed by histidine 43. 4-CDP-2-C-methyl-D-erythritol 2-phosphate is bound by residues 57-59, 62-66, 133-136, phenylalanine 140, and arginine 143; these read DIG, FPDTD, and TTSE.

It belongs to the IspF family. As to quaternary structure, homotrimer. Requires a divalent metal cation as cofactor.

It catalyses the reaction 4-CDP-2-C-methyl-D-erythritol 2-phosphate = 2-C-methyl-D-erythritol 2,4-cyclic diphosphate + CMP. It functions in the pathway isoprenoid biosynthesis; isopentenyl diphosphate biosynthesis via DXP pathway; isopentenyl diphosphate from 1-deoxy-D-xylulose 5-phosphate: step 4/6. Involved in the biosynthesis of isopentenyl diphosphate (IPP) and dimethylallyl diphosphate (DMAPP), two major building blocks of isoprenoid compounds. Catalyzes the conversion of 4-diphosphocytidyl-2-C-methyl-D-erythritol 2-phosphate (CDP-ME2P) to 2-C-methyl-D-erythritol 2,4-cyclodiphosphate (ME-CPP) with a corresponding release of cytidine 5-monophosphate (CMP). In Pasteurella multocida (strain Pm70), this protein is 2-C-methyl-D-erythritol 2,4-cyclodiphosphate synthase.